We begin with the raw amino-acid sequence, 78 residues long: Large ribosomal subunit protein bL28 (78 aa).

Positions Met1–Met22 are disordered.

Belongs to the bacterial ribosomal protein bL28 family.

In Yersinia pseudotuberculosis serotype O:1b (strain IP 31758), this protein is Large ribosomal subunit protein bL28.